Consider the following 393-residue polypeptide: Putative mitochondrial cysteine synthase (393 aa).

The chain crosses the membrane as a helical span at residues L12–Y31. K86 carries the N6-(pyridoxal phosphate)lysine modification. Residues G230–T234 and S338 each bind pyridoxal 5'-phosphate.

Belongs to the cysteine synthase/cystathionine beta-synthase family. Pyridoxal 5'-phosphate serves as cofactor.

It is found in the mitochondrion. The protein resides in the mitochondrion outer membrane. It carries out the reaction O-acetyl-L-serine + hydrogen sulfide = L-cysteine + acetate. Its function is as follows. Putative cysteine synthase that catalyzes the conversion of O-acetyl-L-serine (OAS) into cysteine, the last step in the cysteine biosynthesis pathway. However, this CS-like protein is unlikely to function in cysteine biosynthesis. It seems that in S.cerevisiae cysteine biosynthesis occurs exclusively through the cystathionine pathway and not via direct incorporation of sulfur into OAS. The chain is Putative mitochondrial cysteine synthase from Saccharomyces cerevisiae (strain ATCC 204508 / S288c) (Baker's yeast).